Reading from the N-terminus, the 72-residue chain is UPF0729 protein C18orf32 homolog (72 aa).

Residues 1–33 are necessary for its localzation to the endoplasmic reticulum and lipid droplets; it reads MVCIPCIVIPVLLWIFKKFLEPYIYPVVSRIWP. Positions 36–72 are disordered; sequence AVQQSGDKNMSKVDCKGAGTNGLPTKGPTEVSDKKKD.

This sequence belongs to the UPF0729 family. Interacts with DERL1 and AMFR. In terms of processing, undergoes ER-associated degradation (ERAD).

The protein localises to the endoplasmic reticulum. It is found in the lipid droplet. May activate the NF-kappa-B signaling pathway. This Mus musculus (Mouse) protein is UPF0729 protein C18orf32 homolog.